A 381-amino-acid chain; its full sequence is Queuine tRNA-ribosyltransferase (381 aa).

The Proton acceptor role is filled by Asp96. Residues 96–100 (DSGGF), Asp150, Gln193, and Gly220 contribute to the substrate site. Residues 251–257 (GVGSPDS) are RNA binding. Catalysis depends on Asp270, which acts as the Nucleophile. The segment at 275-279 (TRIAR) is RNA binding; important for wobble base 34 recognition. Residues Cys308, Cys310, Cys313, and His339 each coordinate Zn(2+).

It belongs to the queuine tRNA-ribosyltransferase family. Homodimer. Within each dimer, one monomer is responsible for RNA recognition and catalysis, while the other monomer binds to the replacement base PreQ1. The cofactor is Zn(2+).

It carries out the reaction 7-aminomethyl-7-carbaguanine + guanosine(34) in tRNA = 7-aminomethyl-7-carbaguanosine(34) in tRNA + guanine. It functions in the pathway tRNA modification; tRNA-queuosine biosynthesis. In terms of biological role, catalyzes the base-exchange of a guanine (G) residue with the queuine precursor 7-aminomethyl-7-deazaguanine (PreQ1) at position 34 (anticodon wobble position) in tRNAs with GU(N) anticodons (tRNA-Asp, -Asn, -His and -Tyr). Catalysis occurs through a double-displacement mechanism. The nucleophile active site attacks the C1' of nucleotide 34 to detach the guanine base from the RNA, forming a covalent enzyme-RNA intermediate. The proton acceptor active site deprotonates the incoming PreQ1, allowing a nucleophilic attack on the C1' of the ribose to form the product. After dissociation, two additional enzymatic reactions on the tRNA convert PreQ1 to queuine (Q), resulting in the hypermodified nucleoside queuosine (7-(((4,5-cis-dihydroxy-2-cyclopenten-1-yl)amino)methyl)-7-deazaguanosine). This Bacillus pumilus (strain SAFR-032) protein is Queuine tRNA-ribosyltransferase.